Reading from the N-terminus, the 371-residue chain is Cytochrome b (371 aa).

A run of 4 helical transmembrane segments spans residues 25 to 45 (FGSMLLTCLGLQVLTGFFLAV), 69 to 90 (WMMQNLHAIGASMFFICIYIHI), 105 to 125 (WMSGITLLITLMATAFFGYVL), and 170 to 190 (FFALHFILPFAIISLSSLHII). Heme b-binding residues include H75 and H89. Heme b-binding residues include H174 and H188. H193 lines the a ubiquinone pocket. The next 4 helical transmembrane spans lie at 218–238 (HKDLLLLTLMIMSLFIISSFF), 280–300 (LGGALALVMSIMILFIIPFTH), 312–332 (LSQLMFWTLVSTFITITWAAT), and 339–358 (FIVISQVTSSLYFTFFLSTP).

It belongs to the cytochrome b family. In terms of assembly, the cytochrome bc1 complex contains 3 respiratory subunits (MT-CYB, CYC1 and UQCRFS1), 2 core proteins (UQCRC1 and UQCRC2) and probably 6 low-molecular weight proteins. Heme b is required as a cofactor.

It is found in the mitochondrion inner membrane. Component of the ubiquinol-cytochrome c reductase complex (complex III or cytochrome b-c1 complex) that is part of the mitochondrial respiratory chain. The b-c1 complex mediates electron transfer from ubiquinol to cytochrome c. Contributes to the generation of a proton gradient across the mitochondrial membrane that is then used for ATP synthesis. In Aspidites melanocephalus (Black-headed python), this protein is Cytochrome b (MT-CYB).